The primary structure comprises 218 residues: Adenylate kinase (218 aa).

10-15 (GAGKGT) is a binding site for ATP. Residues 30 to 59 (STGDMIRETIKSGSALGQELKKVLDAGELV) form an NMP region. AMP is bound by residues threonine 31, arginine 36, 57-59 (ELV), and glutamine 92. The tract at residues 122-159 (GRRIHPASGRTYHTKFNPPKVADKDDVTGEPLITRTDD) is LID. ATP contacts are provided by residues arginine 123 and 132 to 133 (TY). AMP contacts are provided by arginine 156 and arginine 167. Glutamine 202 is a binding site for ATP.

Belongs to the adenylate kinase family. In terms of assembly, monomer.

The protein localises to the cytoplasm. It carries out the reaction AMP + ATP = 2 ADP. The protein operates within purine metabolism; AMP biosynthesis via salvage pathway; AMP from ADP: step 1/1. In terms of biological role, catalyzes the reversible transfer of the terminal phosphate group between ATP and AMP. Plays an important role in cellular energy homeostasis and in adenine nucleotide metabolism. This Francisella tularensis subsp. tularensis (strain FSC 198) protein is Adenylate kinase.